Here is a 413-residue protein sequence, read N- to C-terminus: 1-acylglycerol-3-phosphate O-acyltransferase Pnpla3 (413 aa).

Over 1-42 the chain is Cytoplasmic; the sequence is MYDPERRWSLSFAGCGFLGFYHVGATLCLSERAPHLLRDART. The region spanning 10–179 is the PNPLA domain; that stretch reads LSFAGCGFLG…SDNVPVLDAK (170 aa). The GXGXXG motif lies at 14–19; that stretch reads GCGFLG. A helical; Signal-anchor for type II membrane protein membrane pass occupies residues 43 to 63; it reads FFGCSAGALHAVTFVCSLPLG. The GXSXG motif lies at 45–49; that stretch reads GCSAG. The active-site Nucleophile is Ser47. Over 64-413 the chain is Lumenal; the sequence is RIMEILMDLV…HKPQGNSAGL (350 aa). Asp166 (proton acceptor) is an active-site residue. The DGA/G signature appears at 166-168; the sequence is DGG. N-linked (GlcNAc...) asparagine glycans are attached at residues Asn206 and Asn209. The segment at 389-413 is disordered; it reads KDDHRMLKHGHHPSPHKPQGNSAGL. Over residues 394–403 the composition is skewed to basic residues; that stretch reads MLKHGHHPSP.

Restricted to adipose tissue. Expressed in inguinal and epididymal white adipose tissues and in interscapular brown adipose tissue. Also expressed in liver in response to high-sucrose diet.

It is found in the membrane. The protein localises to the lipid droplet. It carries out the reaction a 1-acyl-sn-glycero-3-phosphate + an acyl-CoA = a 1,2-diacyl-sn-glycero-3-phosphate + CoA. It catalyses the reaction a triacylglycerol + H2O = a diacylglycerol + a fatty acid + H(+). The catalysed reaction is a 1-acylglycerol + a 1,3-diacylglycerol = a triacylglycerol + glycerol. The enzyme catalyses a 1-acylglycerol + a 1,2-diacylglycerol = a triacylglycerol + glycerol. It carries out the reaction 2 a 1-acylglycerol = a 1,2-diacylglycerol + glycerol. It catalyses the reaction 1-(9Z-octadecenoyl)-sn-glycero-3-phosphate + (9Z)-octadecenoyl-CoA = 1,2-di-(9Z-octadecenoyl)-sn-glycero-3-phosphate + CoA. The catalysed reaction is 1-(9Z-octadecenoyl)-sn-glycero-3-phosphate + hexadecanoyl-CoA = 1-(9Z)-octadecenoyl-2-hexadecanoyl-sn-glycero-3-phosphate + CoA. The enzyme catalyses 1-(9Z-octadecenoyl)-sn-glycero-3-phosphate + (9Z,12Z)-octadecadienoyl-CoA = 1-(9Z)-octadecenoyl-2-(9Z,12Z)-octadecadienoyl-sn-glycero-3-phosphate + CoA. It carries out the reaction 1-(9Z-octadecenoyl)-sn-glycero-3-phosphate + (5Z,8Z,11Z,14Z)-eicosatetraenoyl-CoA = 1-(9Z)-octadecenoyl-2-(5Z,8Z,11Z,14Z)-eicosatetraenoyl-sn-glycero-3-phosphate + CoA. It catalyses the reaction 2 1-(9Z-octadecenoyl)-glycerol = 1,2-di-(9Z-octadecenoyl)-glycerol + glycerol. The catalysed reaction is 1-(9Z-octadecenoyl)-glycerol + 1,2-di-(9Z-octadecenoyl)-glycerol = 1,2,3-tri-(9Z-octadecenoyl)-glycerol + glycerol. The enzyme catalyses 1-(9Z-octadecenoyl)-glycerol + 1,3-di-(9Z-octadecenoyl)-glycerol = 1,2,3-tri-(9Z-octadecenoyl)-glycerol + glycerol. It carries out the reaction 1,2,3-tri-(9Z-octadecenoyl)-glycerol + H2O = 1,3-di-(9Z-octadecenoyl)-glycerol + (9Z)-octadecenoate + H(+). It catalyses the reaction a 1,2-diacyl-sn-glycero-3-phosphocholine + H2O = a 1-acyl-sn-glycero-3-phosphocholine + a fatty acid + H(+). It participates in phospholipid metabolism. The protein operates within glycerolipid metabolism. Functionally, specifically catalyzes coenzyme A (CoA)-dependent acylation of 1-acyl-sn-glycerol 3-phosphate (2-lysophosphatidic acid/LPA) to generate phosphatidic acid (PA), an important metabolic intermediate and precursor for both triglycerides and glycerophospholipids. Does not esterify other lysophospholipids. Acyl donors are long chain (at least C16) fatty acyl-CoAs: arachidonoyl-CoA, linoleoyl-CoA, oleoyl-CoA and at a lesser extent palmitoyl-CoA. Additionally possesses low triacylglycerol lipase and CoA-independent acylglycerol transacylase activities and thus may play a role in acyl-chain remodeling of triglycerides. In vitro may express hydrolytic activity against glycerolipids triacylglycerol, diacylglycerol and monoacylglycerol, with a strong preference for oleic acid as the acyl moiety. However, the triacylglycerol hydrolase activity is controversial and may be very low. Possesses phospholipase A2 activity. The chain is 1-acylglycerol-3-phosphate O-acyltransferase Pnpla3 from Mus musculus (Mouse).